The chain runs to 474 residues: Gamma-aminobutyric acid receptor subunit beta-1 (474 aa).

Residues 1-25 (MWTVQNRESLGLLSFPVMITMVCCA) form the signal peptide. The Extracellular segment spans residues 26–245 (HSTNEPSNMS…SFRLKRNIGY (220 aa)). N105 is a glycosylation site (N-linked (GlcNAc...) asparagine). Y122 lines the histamine pocket. A disulfide bridge links C161 with C175. N174 is a glycosylation site (N-linked (GlcNAc...) asparagine). Histamine-binding positions include 181–182 (SY) and T227. 2 residues coordinate 4-aminobutanoate: Y182 and T227. 3 helical membrane passes run 246 to 267 (FILQ…SFWI), 271 to 293 (ASAA…STHL), and 305 to 327 (AIDI…YAFV). At 328–451 (NYIFFGKGPQ…DLTDVNSIDK (124 aa)) the chain is on the cytoplasmic side. A helical membrane pass occupies residues 452–473 (WSRMFFPITFSLFNVVYWLYYV).

This sequence belongs to the ligand-gated ion channel (TC 1.A.9) family. Gamma-aminobutyric acid receptor (TC 1.A.9.5) subfamily. GABRB1 sub-subfamily. Heteropentamer, formed by a combination of alpha (GABRA1-6), beta (GABRB1-3), gamma (GABRG1-3), delta (GABRD), epsilon (GABRE), rho (GABRR1-3), pi (GABRP) and theta (GABRQ) chains, each subunit exhibiting distinct physiological and pharmacological properties. Binds UBQLN1.

It localises to the postsynaptic cell membrane. It is found in the cell membrane. It carries out the reaction chloride(in) = chloride(out). Its activity is regulated as follows. Potentiated by etomidate, propofol, pregnanolone and flurazepam. Potentiated by histamine. Beta subunit of the heteropentameric ligand-gated chloride channel gated by gamma-aminobutyric acid (GABA), a major inhibitory neurotransmitter in the brain. GABA-gated chloride channels, also named GABA(A) receptors (GABAAR), consist of five subunits arranged around a central pore and contain one or two GABA active binding sites located at the alpha and beta subunit interfaces, depending on subunit composition. When activated by GABA, GABAARs selectively allow the flow of chloride anions across the cell membrane down their electrochemical gradient. Chloride influx into the postsynaptic neuron following GABAAR opening decreases the neuron ability to generate a new action potential, thereby reducing nerve transmission. Beta-containing GABAARs can simultaneously bind GABA and histamine where histamine binds at the interface of two neighboring beta subunits, which may be involved in the regulation of sleep and wakefulness. This chain is Gamma-aminobutyric acid receptor subunit beta-1, found in Homo sapiens (Human).